Here is a 555-residue protein sequence, read N- to C-terminus: Gamma-aminobutyric acid receptor subunit alpha-4 (555 aa).

Residues 1 to 35 (MVSAKKVPAIAMSFGVSFALLHFLCLAACLNESPG) form the signal peptide. At 36 to 259 (QNQKEEKLCP…FHLRRKMGYF (224 aa)) the chain is on the extracellular side. N-linked (GlcNAc...) asparagine glycosylation occurs at N47. R100 provides a ligand contact to 4-aminobutanoate. 2 N-linked (GlcNAc...) asparagine glycosylation sites follow: N144 and N157. T163 lines the 4-aminobutanoate pocket. Residues C172 and C186 are joined by a disulfide bond. Residues 260 to 280 (MIQTYIPCIMTVILSQVSFWI) form a helical membrane-spanning segment. At 281–284 (NKES) the chain is on the cytoplasmic side. A helical transmembrane segment spans residues 285 to 305 (VPARTVFGITTVLTMTTLSIS). At 306-318 (ARHSLPKVSYATA) the chain is on the extracellular side. A helical membrane pass occupies residues 319-341 (MDWFIAVCFAFVFSALIEFAAVN). The Cytoplasmic segment spans residues 342–518 (YFTNVQMEKA…PPPSGSGTSK (177 aa)). 2 disordered regions span residues 354–435 (KTSK…SPNP) and 495–516 (GTSG…GSGT). Residues 410-421 (SSKSSTVVQGSS) are compositionally biased toward low complexity. A compositionally biased stretch (polar residues) spans 422 to 435 (EATPQSYLASSPNP). Residues 519-545 (IDKYARILFPVTFGAFNMVYWVVYLSK) form a helical membrane-spanning segment. Over 546 to 555 (DTMEKSESLM) the chain is Extracellular.

Belongs to the ligand-gated ion channel (TC 1.A.9) family. Gamma-aminobutyric acid receptor (TC 1.A.9.5) subfamily. GABRA4 sub-subfamily. As to quaternary structure, heteropentamer, formed by a combination of alpha (GABRA1-6), beta (GABRB1-3), gamma (GABRG1-3), delta (GABRD), epsilon (GABRE), rho (GABRR1-3), pi (GABRP) and theta (GABRQ) chains, each subunit exhibiting distinct physiological and pharmacological properties. In terms of tissue distribution, expressed in the brain.

The protein resides in the cell membrane. It localises to the postsynaptic cell membrane. The enzyme catalyses chloride(in) = chloride(out). Its activity is regulated as follows. Potentiated by histamine. Its function is as follows. Alpha subunit of the heteropentameric ligand-gated chloride channel gated by gamma-aminobutyric acid (GABA), a major inhibitory neurotransmitter in the brain. GABA-gated chloride channels, also named GABA(A) receptors (GABAAR), consist of five subunits arranged around a central pore and contain GABA active binding site(s) located at the alpha and beta subunit interface(s). When activated by GABA, GABAARs selectively allow the flow of chloride anions across the cell membrane down their electrochemical gradient. GABAARs containing alpha-4 are predominantly extrasynaptic, contributing to tonic inhibition in dentate granule cells and thalamic relay neurons. Extrasynaptic alpha-4-containing GABAARs control levels of excitability and network activity. GABAARs containing alpha-4 are often found with the delta or gamma-2 subunits, in combination with beta subunits. GABAAR containing alpha-4-beta-3-delta subunits can simultaneously bind GABA and histamine where histamine binds at the interface of two neighboring beta subunits, which may be involved in the regulation of sleep and wakefulness. This chain is Gamma-aminobutyric acid receptor subunit alpha-4 (GABRA4), found in Bos taurus (Bovine).